The sequence spans 428 residues: MSYYLSSENHLDPGPIYMRENGQLHMVNLALDGVRSSLQKPRPFRLFPKGFSVELCMNREDDTARKEKTDHFIFTYTREGNLRYSAKSLFSLVLGFISDNVDHIDSLIGFPEQIAEKLFSAAEARQKFTEPGAGLRALQKFTEAYGSLVLCSLCLRNRYLVISEKLEEIKSFRELTCLDLSCCKLGDEHELLEHLTNEALSSVTQLHLKDNCLSDAGVRKMTAPVRVMKRGLENLTLLDLSCNPEITDAGIGYLFSFRKLNCLDISGTGLKDIKTVKHKLQTHIGLVHSKVPLKEFDHSNCKTEGWADQIVLQWERVTAEAVKPRETSEPRAAAQRFYGKRSRAEAPLKCPLADTHMNSSEKLQFYKEKAPDCHGPVLKHEAISSQESKKSKKRPFEESETEQNNSSQPSKQKYVCLAVEDWDLLNSY.

5 LRR repeats span residues 149–170, 174–195, 202–222, 234–255, and 259–280; these read VLCS…EEIK, ELTC…LEHL, SVTQ…RKMT, NLTL…GYLF, and KLNC…KHKL. The interval 379-412 is disordered; the sequence is KHEAISSQESKKSKKRPFEESETEQNNSSQPSKQ. Ser-406 and Ser-407 each carry phosphoserine.

This sequence belongs to the LRRC42 family.

This is Leucine-rich repeat-containing protein 42 (LRRC42) from Homo sapiens (Human).